The following is a 394-amino-acid chain: Protein TsgA homolog (394 aa).

12 consecutive transmembrane segments (helical) span residues 11-31 (WISY…GIVM), 51-71 (FLNA…EIIP), 76-96 (LVFG…GHNL), 101-121 (ISMF…TFLV), 134-154 (LLFT…AAAM), 162-182 (WYWV…LTLC), 206-226 (VGVL…LGFI), 246-266 (QLVS…SFIL), 274-294 (IVTV…STDN), 302-322 (ILAL…LGSL), 334-354 (FILT…GPIV), and 363-383 (LETA…LGFF).

This sequence belongs to the major facilitator superfamily. TsgA family.

It is found in the cell inner membrane. This is Protein TsgA homolog from Yersinia pestis bv. Antiqua (strain Antiqua).